The chain runs to 527 residues: uncharacterized protein (527 aa).

This is an uncharacterized protein from Schizosaccharomyces pombe (strain 972 / ATCC 24843) (Fission yeast).